The following is a 429-amino-acid chain: Adenylosuccinate synthetase (429 aa).

Residues 12 to 18 (GDEGKGK) and 40 to 42 (GHT) each bind GTP. Aspartate 13 acts as the Proton acceptor in catalysis. 2 residues coordinate Mg(2+): aspartate 13 and glycine 40. Residues 13-16 (DEGK), 38-41 (NAGH), threonine 129, arginine 143, glutamine 223, threonine 238, and arginine 302 contribute to the IMP site. The Proton donor role is filled by histidine 41. Substrate is bound at residue 298-304 (VVTGRKR). GTP-binding positions include arginine 304, 330-332 (KLD), and 412-414 (STS).

The protein belongs to the adenylosuccinate synthetase family. In terms of assembly, homodimer. Requires Mg(2+) as cofactor.

The protein localises to the cytoplasm. It carries out the reaction IMP + L-aspartate + GTP = N(6)-(1,2-dicarboxyethyl)-AMP + GDP + phosphate + 2 H(+). It participates in purine metabolism; AMP biosynthesis via de novo pathway; AMP from IMP: step 1/2. Functionally, plays an important role in the de novo pathway of purine nucleotide biosynthesis. Catalyzes the first committed step in the biosynthesis of AMP from IMP. The sequence is that of Adenylosuccinate synthetase from Brucella ovis (strain ATCC 25840 / 63/290 / NCTC 10512).